A 499-amino-acid chain; its full sequence is Interferon regulatory factor 5 (499 aa).

The Nuclear localization signal motif lies at 12–18 (PRRVRLK). A DNA-binding region (IRF tryptophan pentad repeat) is located at residues 14–122 (RVRLKPWLVA…QPYKVYEVCS (109 aa)). Positions 121-142 (CSNGPAPAESQPSEDNAEEEEE) are disordered. Residues 145–155 (LQKMLPGLSIT) carry the Nuclear export signal motif. Residues S153 and S294 each carry the phosphoserine; by TBK1 modification. At S302 the chain carries Phosphoserine. Glycyl lysine isopeptide (Lys-Gly) (interchain with G-Cter in ubiquitin) cross-links involve residues K412 and K413. 5 positions are modified to phosphoserine: S432, S436, S438, S441, and S447.

It belongs to the IRF family. As to quaternary structure, homodimer, when phosphorylated. Interacts with TASL (via pLxIS motif); interaction takes place downstream of TLR7, TLR8 or TLR9, leading to its activation. Interacts with MYD88 and TRAF6. In terms of processing, phosphorylation of serine and threonine residues by IKBKB in a C-terminal autoinhibitory region, stimulates dimerization, transport into the nucleus, assembly with the coactivator CBP/EP300 and initiation of transcription. Post-translationally, 'Lys-63'-linked polyubiquitination by TRAF6 is required for activation.

The protein resides in the cytoplasm. It localises to the nucleus. Maintained as a monomer in an autoinhibited state. Phosphorylation and activation follow the following steps: innate adapter protein TASL recruits IRF5, thereby licensing IRF5 for phosphorylation by IKBKB. Phosphorylated IRF5 dissociates from the adapter proteins, dimerizes, and then enters the nucleus to induce IFNs. Functionally, transcription factor that plays a critical role in innate immunity by activating expression of type I interferon (IFN) IFNA and INFB and inflammatory cytokines downstream of endolysosomal toll-like receptors TLR7, TLR8 and TLR9. Regulates the transcription of type I IFN genes (IFN-alpha and IFN-beta) and IFN-stimulated genes (ISG) by binding to an interferon-stimulated response element (ISRE) in their promoters. Can efficiently activate both the IFN-beta (IFNB) and the IFN-alpha (IFNA) genes and mediate their induction downstream of the TLR-activated, MyD88-dependent pathway. The protein is Interferon regulatory factor 5 of Bos taurus (Bovine).